The chain runs to 291 residues: 33 kDa chaperonin (291 aa).

2 disulfide bridges follow: C237–C239 and C270–C273.

This sequence belongs to the HSP33 family. Under oxidizing conditions two disulfide bonds are formed involving the reactive cysteines. Under reducing conditions zinc is bound to the reactive cysteines and the protein is inactive.

It is found in the cytoplasm. Functionally, redox regulated molecular chaperone. Protects both thermally unfolding and oxidatively damaged proteins from irreversible aggregation. Plays an important role in the bacterial defense system toward oxidative stress. The polypeptide is 33 kDa chaperonin (Bacillus cereus (strain B4264)).